The following is a 402-amino-acid chain: Arginine deiminase (402 aa).

Catalysis depends on Cys392, which acts as the Amidino-cysteine intermediate.

It belongs to the arginine deiminase family.

The protein resides in the cytoplasm. It carries out the reaction L-arginine + H2O = L-citrulline + NH4(+). It functions in the pathway amino-acid degradation; L-arginine degradation via ADI pathway; carbamoyl phosphate from L-arginine: step 1/2. In Mycobacterium bovis (strain ATCC BAA-935 / AF2122/97), this protein is Arginine deiminase (arcA).